The sequence spans 365 residues: Chorismate synthase (365 aa).

Arg48 and Arg54 together coordinate NADP(+). FMN contacts are provided by residues 131-133, 243-244, Gly288, 303-307, and Arg329; these read RSS, NA, and KPTSS.

Belongs to the chorismate synthase family. In terms of assembly, homotetramer. Requires FMNH2 as cofactor.

The catalysed reaction is 5-O-(1-carboxyvinyl)-3-phosphoshikimate = chorismate + phosphate. Its pathway is metabolic intermediate biosynthesis; chorismate biosynthesis; chorismate from D-erythrose 4-phosphate and phosphoenolpyruvate: step 7/7. Catalyzes the anti-1,4-elimination of the C-3 phosphate and the C-6 proR hydrogen from 5-enolpyruvylshikimate-3-phosphate (EPSP) to yield chorismate, which is the branch point compound that serves as the starting substrate for the three terminal pathways of aromatic amino acid biosynthesis. This reaction introduces a second double bond into the aromatic ring system. The polypeptide is Chorismate synthase (Rhizobium leguminosarum bv. trifolii (strain WSM2304)).